A 71-amino-acid polypeptide reads, in one-letter code: Translation initiation factor IF-1 (71 aa).

Residues 1-71 (MSKDDLIQFT…LTKGRVIHRH (71 aa)) enclose the S1-like domain.

It belongs to the IF-1 family. Component of the 30S ribosomal translation pre-initiation complex which assembles on the 30S ribosome in the order IF-2 and IF-3, IF-1 and N-formylmethionyl-tRNA(fMet); mRNA recruitment can occur at any time during PIC assembly.

It localises to the cytoplasm. In terms of biological role, one of the essential components for the initiation of protein synthesis. Stabilizes the binding of IF-2 and IF-3 on the 30S subunit to which N-formylmethionyl-tRNA(fMet) subsequently binds. Helps modulate mRNA selection, yielding the 30S pre-initiation complex (PIC). Upon addition of the 50S ribosomal subunit IF-1, IF-2 and IF-3 are released leaving the mature 70S translation initiation complex. The polypeptide is Translation initiation factor IF-1 (Rickettsia conorii (strain ATCC VR-613 / Malish 7)).